We begin with the raw amino-acid sequence, 302 residues long: MDLTALAGELQTGLKLQVLTNEPLSRHTTWRLGGPADLLARPRSREELDYCLSFARRKGLPLHILGNGSNLLVLDGGVRGLVVQTREWRQVIIEGRKILATAGTLLPGLLQVASKKGLGGLEFAAGIPATVGGAVVMNAGTPAGCLGDLVVGVEVLDYDGRRHILENREITFTYRHSSLHRAGTVVTVTLELVPDEVPAIRERIEANLHRRRSRQPLEWPNAGSVFKNPPGYYAGRLIEAVGAKGWRVGGAEVAEKHANFIINRGQATAADVMELIDRVREAVARQLGIDLELEIEVWGEGL.

The 164-residue stretch at 32–195 (LGGPADLLAR…VTVTLELVPD (164 aa)) folds into the FAD-binding PCMH-type domain. The active site involves Arg-175. Catalysis depends on Ser-224, which acts as the Proton donor. Glu-294 is an active-site residue.

This sequence belongs to the MurB family. The cofactor is FAD.

The protein resides in the cytoplasm. It catalyses the reaction UDP-N-acetyl-alpha-D-muramate + NADP(+) = UDP-N-acetyl-3-O-(1-carboxyvinyl)-alpha-D-glucosamine + NADPH + H(+). Its pathway is cell wall biogenesis; peptidoglycan biosynthesis. Cell wall formation. The protein is UDP-N-acetylenolpyruvoylglucosamine reductase of Moorella thermoacetica (strain ATCC 39073 / JCM 9320).